The sequence spans 341 residues: Trans-3-hydroxy-L-proline dehydratase (341 aa).

S90 (proton acceptor) is an active-site residue. Residues 91–92 (GS), D252, and 257–258 (GT) contribute to the substrate site.

It belongs to the proline racemase family.

The catalysed reaction is trans-3-hydroxy-L-proline = 1-pyrroline-2-carboxylate + H2O. Catalyzes the dehydration of trans-3-hydroxy-L-proline (t3LHyp) to Delta(1)-pyrroline-2-carboxylate (Pyr2C). May be involved in a degradation pathway of t3LHyp, which would allow L.aggregata to grow on t3LHyp as a sole carbon source. Displays neither proline racemase activity nor 4-hydroxyproline 2-epimerase activity. The chain is Trans-3-hydroxy-L-proline dehydratase from Roseibium aggregatum (strain ATCC 25650 / DSM 13394 / JCM 20685 / NBRC 16684 / NCIMB 2208 / IAM 12614 / B1) (Stappia aggregata).